Reading from the N-terminus, the 360-residue chain is Archaemetzincin-2 (360 aa).

Histidine 254 provides a ligand contact to Zn(2+). Catalysis depends on glutamate 255, which acts as the Proton acceptor. 6 residues coordinate Zn(2+): histidine 258, histidine 264, cysteine 265, cysteine 270, cysteine 289, and cysteine 292.

The protein belongs to the peptidase M54 family. Zn(2+) is required as a cofactor. As to expression, down-regulated in testis from patients with maturation arrest (MA) or Sertoli cell-only syndrome (SCOS).

Probable zinc metalloprotease. This chain is Archaemetzincin-2 (AMZ2), found in Homo sapiens (Human).